The chain runs to 327 residues: 4-hydroxy-2-oxoglutarate aldolase, mitochondrial (327 aa).

The N-terminal 25 residues, 1 to 25 (MLVPRVWSSVRLGLSRVLSRTLRGW), are a transit peptide targeting the mitochondrion. Position 77–78 (77–78 (SN)) interacts with substrate. Lys-196 acts as the Schiff-base intermediate with substrate in catalysis. Positions 198 and 222 each coordinate substrate.

The protein belongs to the DapA family. As to quaternary structure, homotetramer.

Its subcellular location is the mitochondrion. It carries out the reaction (4S)-4-hydroxy-2-oxoglutarate = glyoxylate + pyruvate. The enzyme catalyses (4R)-4-hydroxy-2-oxoglutarate = glyoxylate + pyruvate. With respect to regulation, inhibited by divalent cations. Catalyzes the final step in the metabolic pathway of hydroxyproline. This is 4-hydroxy-2-oxoglutarate aldolase, mitochondrial (HOGA1) from Bos taurus (Bovine).